Here is a 476-residue protein sequence, read N- to C-terminus: Probable pectin lyase F (476 aa).

The signal sequence occupies residues 1–20 (MTLLRHLLTATALLGASVQA). Cysteines 84 and 108 form a disulfide. Asn-103 and Asn-131 each carry an N-linked (GlcNAc...) asparagine glycan. The active site involves Arg-258. Residues Asn-277 and Asn-318 are each glycosylated (N-linked (GlcNAc...) asparagine). A disulfide bridge links Cys-325 with Cys-333. Asn-385 carries an N-linked (GlcNAc...) asparagine glycan. The segment at 412 to 476 (FVPAYSEAGP…HHHQGHGRGY (65 aa)) is disordered. A compositionally biased stretch (polar residues) spans 426-453 (VPTQPSWSWRTVTNGPAPTGAPSDSPSA). Basic residues predominate over residues 465–476 (NKHHHQGHGRGY).

The protein belongs to the polysaccharide lyase 1 family.

Its subcellular location is the secreted. It carries out the reaction Eliminative cleavage of (1-&gt;4)-alpha-D-galacturonan methyl ester to give oligosaccharides with 4-deoxy-6-O-methyl-alpha-D-galact-4-enuronosyl groups at their non-reducing ends.. In terms of biological role, pectinolytic enzymes consist of four classes of enzymes: pectin lyase, polygalacturonase, pectin methylesterase and rhamnogalacturonase. Among pectinolytic enzymes, pectin lyase is the most important in depolymerization of pectin, since it cleaves internal glycosidic bonds of highly methylated pectins. This is Probable pectin lyase F (pelF) from Aspergillus niger (strain ATCC MYA-4892 / CBS 513.88 / FGSC A1513).